Reading from the N-terminus, the 1363-residue chain is Vascular endothelial growth factor receptor 3 (1363 aa).

The signal sequence occupies residues 1-24 (MQPGAALNRRLWLCLGLLQGLANG). The Extracellular segment spans residues 25–775 (YSMTPPTLNI…EGSEDKGSME (751 aa)). N-linked (GlcNAc...) asparagine glycosylation is found at Asn33, Asn104, Asn166, Asn251, Asn299, and Asn411. Ig-like C2-type domains follow at residues 44-118 (GDSL…YIKA), 151-213 (KDSM…WGDQ), 230-326 (YDIQ…TEVI), 331-415 (PFIS…ISLE), 422-552 (PHIH…FYVT), 555-671 (PDGF…KYLS), and 678-764 (PRLT…ASVA). 2 disulfide bridges follow: Cys51-Cys111 and Cys158-Cys206. Residues Cys252 and Cys310 are joined by a disulfide bond. Disulfide bonds link Cys445–Cys534, Cys466–Cys486, and Cys578–Cys653. N-linked (GlcNAc...) asparagine glycans are attached at residues Asn515, Asn527, Asn582, Asn594, and Asn683. Cysteines 699 and 751 form a disulfide. Asn758 carries N-linked (GlcNAc...) asparagine glycosylation. Residues 776 to 796 (IVILIGTGVIAVFFWVLLLLI) form a helical membrane-spanning segment. At 797-1363 (FCNMKRPAHA…GSTFFADSNY (567 aa)) the chain is on the cytoplasmic side. Phosphotyrosine; by SRC is present on residues Tyr830 and Tyr833. In terms of domain architecture, Protein kinase spans 845-1173 (LHLGRVLGHG…DLVEILGDLL (329 aa)). Residues 851–859 (LGHGAFGKV) and Lys879 contribute to the ATP site. The Proton acceptor role is filled by Asp1037. Tyr1063 carries the phosphotyrosine; by autocatalysis and SRC modification. 4 positions are modified to phosphotyrosine; by autocatalysis: Tyr1068, Tyr1230, Tyr1231, and Tyr1265. The segment covering 1289–1317 (SRHRQEGSFSRKDPGQHMDISRGHPDLQG) has biased composition (basic and acidic residues). The segment at 1289 to 1330 (SRHRQEGSFSRKDPGQHMDISRGHPDLQGRRRRPTQGAQGGK) is disordered. Tyr1333 and Tyr1337 each carry phosphotyrosine; by autocatalysis and SRC. Tyr1363 is subject to Phosphotyrosine; by autocatalysis.

It belongs to the protein kinase superfamily. Tyr protein kinase family. CSF-1/PDGF receptor subfamily. As to quaternary structure, interacts with VEGFC and VEGFD. Monomer in the absence of bound VEGFC or VEGFD. Homodimer in the presence of bound VEGFC or VEGFD. Can also form a heterodimer with KDR. Interacts with PTPN14; the interaction is enhanced by stimulation with VEGFC. Interacts with CRK, GRB2, PTK2/FAK1, SHC1, PIK3R1 and PTPN11/SHP-2. Identified in a complex with SRC and ITGB1. Identified in a complex with SRC and ITGB1. In terms of processing, autophosphorylated on tyrosine residues upon ligand binding. Autophosphorylation occurs in trans, i.e. one subunit of the dimeric receptor phosphorylates tyrosine residues on the other subunit. Phosphorylation in response to H(2)O(2) is mediated by a process that requires SRC and PRKCD activity. Phosphorylation at Tyr-1068 is required for autophosphorylation at additional tyrosine residues. Phosphorylation at Tyr-1063 and Tyr-1337 is important for interaction with CRK and subsequent activation of MAPK8. Phosphorylation at Tyr-1230, Tyr-1231 and Tyr-1337 is important for interaction with GRB2 and subsequent activation of the AKT1 and MAPK1/ERK2 and/or MAPK3/ERK1 signaling pathways. In response to endothelial cell adhesion onto collagen, can also be phosphorylated in the absence of FLT4 kinase activity by SRC.

The protein localises to the cell membrane. It localises to the cytoplasm. It is found in the nucleus. It carries out the reaction L-tyrosyl-[protein] + ATP = O-phospho-L-tyrosyl-[protein] + ADP + H(+). Present in an inactive conformation in the absence of bound ligand. Binding of VEGFC or VEGFD leads to dimerization and activation by autophosphorylation on tyrosine residues. Functionally, tyrosine-protein kinase that acts as a cell-surface receptor for VEGFC and VEGFD, and plays an essential role in adult lymphangiogenesis and in the development of the vascular network and the cardiovascular system during embryonic development. Promotes proliferation, survival and migration of endothelial cells, and regulates angiogenic sprouting. Signaling by activated FLT4 leads to enhanced production of VEGFC, and to a lesser degree VEGFA, thereby creating a positive feedback loop that enhances FLT4 signaling. Modulates KDR signaling by forming heterodimers. Mediates activation of the MAPK1/ERK2, MAPK3/ERK1 signaling pathway, of MAPK8 and the JUN signaling pathway, and of the AKT1 signaling pathway. Phosphorylates SHC1. Mediates phosphorylation of PIK3R1, the regulatory subunit of phosphatidylinositol 3-kinase. Promotes phosphorylation of MAPK8 at 'Thr-183' and 'Tyr-185', and of AKT1 at 'Ser-473'. The sequence is that of Vascular endothelial growth factor receptor 3 (Flt4) from Rattus norvegicus (Rat).